The primary structure comprises 960 residues: Serine/threonine-protein kinase atg1 (960 aa).

In terms of domain architecture, Protein kinase spans 22–327 (YTRLDEIGRG…FPEFFSNNVI (306 aa)). Residues 28–36 (IGRGSFATV) and K51 contribute to the ATP site. Residue D165 is the Proton acceptor of the active site. Disordered regions lie at residues 333-467 (GLLA…RAQE), 503-538 (PRLQ…PHAN), 550-571 (ARAD…QSPT), 673-694 (SAST…SADS), 789-815 (RLPP…TADV), and 926-960 (AKRS…TPPR). Polar residues-rich tracts occupy residues 376 to 388 (PVTT…TPPT) and 520 to 536 (RRTT…SSPH). Positions 550-566 (ARADSTHQRQHSYERRY) are enriched in basic and acidic residues. Residues 789–800 (RLPPDHPSHPDN) are compositionally biased toward basic and acidic residues. A compositionally biased stretch (low complexity) spans 801–815 (HSISSTAGSSSTADV). Positions 930–951 (SAPTPTAGSAGKTPTSNISPVT) are enriched in polar residues.

This sequence belongs to the protein kinase superfamily. Ser/Thr protein kinase family. APG1/unc-51/ULK1 subfamily. As to quaternary structure, homodimer. Forms a ternary complex with ATG13 and ATG17.

Its subcellular location is the cytoplasm. The protein localises to the preautophagosomal structure membrane. The catalysed reaction is L-seryl-[protein] + ATP = O-phospho-L-seryl-[protein] + ADP + H(+). It catalyses the reaction L-threonyl-[protein] + ATP = O-phospho-L-threonyl-[protein] + ADP + H(+). In terms of biological role, serine/threonine protein kinase involved in the cytoplasm to vacuole transport (Cvt) and found to be essential in autophagy, where it is required for the formation of autophagosomes. Involved in the clearance of protein aggregates which cannot be efficiently cleared by the proteasome. Required for selective autophagic degradation of the nucleus (nucleophagy) as well as for mitophagy which contributes to regulate mitochondrial quantity and quality by eliminating the mitochondria to a basal level to fulfill cellular energy requirements and preventing excess ROS production. Also involved in endoplasmic reticulum-specific autophagic process, in selective removal of ER-associated degradation (ERAD) substrates. Plays a key role in ATG9 and ATG23 cycling through the pre-autophagosomal structure and is necessary to promote ATG18 binding to ATG9 through phosphorylation of ATG9. Catalyzes phosphorylation of ATG4, decreasing the interaction between ATG4 and ATG8 and impairing deconjugation of PE-conjugated forms of ATG8. The sequence is that of Serine/threonine-protein kinase atg1 from Penicillium rubens (strain ATCC 28089 / DSM 1075 / NRRL 1951 / Wisconsin 54-1255) (Penicillium chrysogenum).